A 102-amino-acid chain; its full sequence is Large ribosomal subunit protein bL21 (102 aa).

Belongs to the bacterial ribosomal protein bL21 family. As to quaternary structure, part of the 50S ribosomal subunit. Contacts protein L20.

This protein binds to 23S rRNA in the presence of protein L20. This is Large ribosomal subunit protein bL21 from Lactiplantibacillus plantarum (strain ATCC BAA-793 / NCIMB 8826 / WCFS1) (Lactobacillus plantarum).